The primary structure comprises 95 residues: Co-chaperonin GroES (95 aa).

The protein belongs to the GroES chaperonin family. Heptamer of 7 subunits arranged in a ring. Interacts with the chaperonin GroEL.

Its subcellular location is the cytoplasm. In terms of biological role, together with the chaperonin GroEL, plays an essential role in assisting protein folding. The GroEL-GroES system forms a nano-cage that allows encapsulation of the non-native substrate proteins and provides a physical environment optimized to promote and accelerate protein folding. GroES binds to the apical surface of the GroEL ring, thereby capping the opening of the GroEL channel. This Streptococcus mutans serotype c (strain ATCC 700610 / UA159) protein is Co-chaperonin GroES.